We begin with the raw amino-acid sequence, 399 residues long: Delta(12) acyl-lipid conjugase (11E,13E-forming) (399 aa).

Residues 11–30 (RNGGGPKKKMGPGQGLGPGE) are disordered. Transmembrane regions (helical) follow at residues 61–81 (FSYL…ADTY) and 93–113 (LAWP…WGIA). The Histidine box-1 motif lies at 114-118 (HDCGH). The chain crosses the membrane as a helical span at residues 126 to 146 (LVDDVVGFLIHSLVFVPYFSF). The Histidine box-2 signature appears at 150 to 154 (HRRHH). The next 3 membrane-spanning stretches (helical) occupy residues 188 to 208 (VFII…FNIS), 232 to 252 (VLVH…YRIA), and 258 to 278 (GWLI…VVLI). Residues 325-329 (HVVHH) carry the Histidine box-3 motif.

This sequence belongs to the fatty acid desaturase type 1 family. Expressed in developing seeds, but not in leaves.

The protein localises to the membrane. It carries out the reaction a (9Z,12Z)-octadecadienoyl-containing glycerolipid + 2 Fe(II)-[cytochrome b5] + O2 + 2 H(+) = a (9Z,11E,13E)-octadecatrienoyl-containing glycerolipid + 2 Fe(III)-[cytochrome b5] + 2 H2O. The catalysed reaction is (9Z,12Z,15Z)-octadecatrienoyl-containing glycerolipid + 2 Fe(II)-[cytochrome b5] + O2 + 2 H(+) = a (9Z,11E,13E,15Z)-octadecatetraenoyl-containing glycerolipid + 2 Fe(III)-[cytochrome b5] + 2 H2O. The protein operates within lipid metabolism; polyunsaturated fatty acid biosynthesis. Converts linoleic acid to alpha-eleostearic acid (18:3(9Z,11E,13E)) and alpha-linolenic acid to alpha-parinaric acid (18:4(9Z,11E, 13E, 15Z)). Converts a single cis double bond at carbon 12 to two conjugated trans bonds at positions 11 and 13. The polypeptide is Delta(12) acyl-lipid conjugase (11E,13E-forming) (Momordica charantia (Bitter gourd)).